Consider the following 218-residue polypeptide: Octanoyltransferase (218 aa).

Positions 32 to 214 (ALTPDEIWLV…HFTQLLGYND (183 aa)) constitute a BPL/LPL catalytic domain. Substrate-binding positions include 71-78 (RGGQITYH), 143-145 (SLG), and 156-158 (GLA). Cys174 acts as the Acyl-thioester intermediate in catalysis.

It belongs to the LipB family.

The protein localises to the cytoplasm. It catalyses the reaction octanoyl-[ACP] + L-lysyl-[protein] = N(6)-octanoyl-L-lysyl-[protein] + holo-[ACP] + H(+). The protein operates within protein modification; protein lipoylation via endogenous pathway; protein N(6)-(lipoyl)lysine from octanoyl-[acyl-carrier-protein]: step 1/2. Functionally, catalyzes the transfer of endogenously produced octanoic acid from octanoyl-acyl-carrier-protein onto the lipoyl domains of lipoate-dependent enzymes. Lipoyl-ACP can also act as a substrate although octanoyl-ACP is likely to be the physiological substrate. This chain is Octanoyltransferase, found in Histophilus somni (strain 129Pt) (Haemophilus somnus).